Consider the following 267-residue polypeptide: PF03932 family protein CutC (267 aa).

Belongs to the CutC family.

Its subcellular location is the cytoplasm. This chain is PF03932 family protein CutC, found in Xylella fastidiosa (strain 9a5c).